We begin with the raw amino-acid sequence, 113 residues long: Iron-sulfur cluster insertion protein ErpA (113 aa).

Iron-sulfur cluster contacts are provided by cysteine 41, cysteine 105, and cysteine 107.

The protein belongs to the HesB/IscA family. In terms of assembly, homodimer. The cofactor is iron-sulfur cluster.

Its function is as follows. Required for insertion of 4Fe-4S clusters for at least IspG. The protein is Iron-sulfur cluster insertion protein ErpA of Hydrogenovibrio crunogenus (strain DSM 25203 / XCL-2) (Thiomicrospira crunogena).